We begin with the raw amino-acid sequence, 354 residues long: MAELKNDRYLRALLKQPVDVTPVWMMRQAGRYLPEYKEVRAQAGDFMSLCRNAELACEVTLQPLRRYDLDAAILFSDILTVPDAMGLGLYFEAGEGPRFERPTDTIDAIKKLCIPDPEDELGYVMRAVSTIRRELNGSVPLIGFSGSPWTLATYMVEGGSSKTFEKIKRMAYAEPAALHMLLDKLADSVVLYLNAQVANGVQSLMIFDSWGGALSHHAYREFSLRYMQKIVDGLTRFADGRKVPVTLFTKGGGLWLESMAETGCDALGLDWTVDIGDARRRVGHKVALQGNMDPSMLYATPERIHQEVDQILASYGEGTGHVFNLGHGIHQHVDPEHAGAFINSVHELSGKYHK.

Residues 27–31 (RQAGR), aspartate 77, tyrosine 154, serine 209, and histidine 327 each bind substrate.

Belongs to the uroporphyrinogen decarboxylase family. In terms of assembly, homodimer.

The protein localises to the cytoplasm. It catalyses the reaction uroporphyrinogen III + 4 H(+) = coproporphyrinogen III + 4 CO2. The protein operates within porphyrin-containing compound metabolism; protoporphyrin-IX biosynthesis; coproporphyrinogen-III from 5-aminolevulinate: step 4/4. In terms of biological role, catalyzes the decarboxylation of four acetate groups of uroporphyrinogen-III to yield coproporphyrinogen-III. The polypeptide is Uroporphyrinogen decarboxylase (Shewanella frigidimarina (strain NCIMB 400)).